A 555-amino-acid chain; its full sequence is Cytochrome P450 monooxygeanse terQ (555 aa).

The chain crosses the membrane as a helical span at residues Val-10–Leu-30. Residue Cys-479 participates in heme binding. The interval Asp-535–Ser-555 is disordered.

This sequence belongs to the cytochrome P450 family. Requires heme as cofactor.

The protein localises to the membrane. Its pathway is secondary metabolite biosynthesis. Functionally, cytochrome P450 monooxygeanse; part of the gene cluster that mediates the biosynthesis of terpendoles, indole-diterpene (IDT) mycotoxins including terpendole I, terpendole K, terpendole C, as well as the kinesin Eg5 inhibitor terpendole E. TerQ is a C11-hydroxylating enzyme that converts paspalline into terpendole E. Is also able to hydroxylate 13-desoxyterpendole I at C-13 to produce terpendole I. Terpendoles biosynthesis begins with the synthesis of geranylgeranyl diphosphate (GGPP) by a yet unidentified GGPP synthase. Condensation of indole-3-glycerol phosphate with GGPP by the prenyltransferase terC then forms 3-geranylgeranylindole (3-GGI), followed by epoxidation and cyclization of this intermediate (by the FAD-dependent monooxygeanse terM and the terpene cyclase terB) to form paspaline. The cytochrome monooxygenase terQ then hydroxylates paspalline at C-11 to yield terpendole E. The cytochrome monooxygenase terP converts terpendole E to 13-desoxyterpendole I, and terQ converts 13-desoxyterpendole I into terpendole I. TerF and terK are required for conversion of terpendole I to terpendole C which is further converted to terpendole K. In Tolypocladium album (Soil fungus), this protein is Cytochrome P450 monooxygeanse terQ.